Here is a 510-residue protein sequence, read N- to C-terminus: Light-independent protochlorophyllide reductase subunit B (510 aa).

[4Fe-4S] cluster is bound at residue D36. Catalysis depends on D297, which acts as the Proton donor. 432–433 (GM) contacts substrate.

It belongs to the ChlB/BchB/BchZ family. In terms of assembly, protochlorophyllide reductase is composed of three subunits; ChlL, ChlN and ChlB. Forms a heterotetramer of two ChlB and two ChlN subunits. The cofactor is [4Fe-4S] cluster.

The protein localises to the plastid. The protein resides in the chloroplast. It catalyses the reaction chlorophyllide a + oxidized 2[4Fe-4S]-[ferredoxin] + 2 ADP + 2 phosphate = protochlorophyllide a + reduced 2[4Fe-4S]-[ferredoxin] + 2 ATP + 2 H2O. It participates in porphyrin-containing compound metabolism; chlorophyll biosynthesis (light-independent). In terms of biological role, component of the dark-operative protochlorophyllide reductase (DPOR) that uses Mg-ATP and reduced ferredoxin to reduce ring D of protochlorophyllide (Pchlide) to form chlorophyllide a (Chlide). This reaction is light-independent. The NB-protein (ChlN-ChlB) is the catalytic component of the complex. The chain is Light-independent protochlorophyllide reductase subunit B from Pinus thunbergii (Japanese black pine).